The chain runs to 687 residues: Triadin (687 aa).

At 1–47 (MTEITAEGNASITTTVIDNKNGSVPKSPGKVLKRTVTEDIVTTFSSP) the chain is on the cytoplasmic side. The helical transmembrane segment at 48–68 (AAWLLVIALIITWSAVAIVMF) threads the bilayer. The Lumenal segment spans residues 69–687 (DLVDYKNFSA…NSPGQKQQEQ (619 aa)). Positions 117-130 (DGDEDDEDADEDID) are enriched in acidic residues. 3 disordered regions span residues 117 to 265 (DGDE…EQKD), 280 to 643 (GDLK…QKSP), and 660 to 687 (FQFP…QQEQ). Residues 131–265 (KGEIEEPPLK…PAVPKHEQKD (135 aa)) show a composition bias toward basic and acidic residues. The span at 295–306 (LTASRPALSTPS) shows a compositional bias: polar residues. Phosphoserine occurs at positions 303 and 306. The segment covering 307–356 (LEEKEKEEKKKVEKKVTSDTKKKEKGEAKKKSEKETVIDGKGKEPGKPPE) has biased composition (basic and acidic residues). A compositionally biased stretch (low complexity) spans 357 to 370 (TKQTTTKLTTQAAA). Composition is skewed to basic and acidic residues over residues 371–390 (TKDE…EEKP), 396–431 (EKKE…KEEI), 442–459 (GKKE…DVKP), and 466–501 (LKKE…KEAK). The N-linked (GlcNAc...) asparagine glycan is linked to asparagine 514. Basic and acidic residues-rich tracts occupy residues 539–583 (TAEK…KVPP) and 594–630 (TRAE…DKEV). 2 stretches are compositionally biased toward polar residues: residues 631–643 (TNNV…QKSP) and 667–687 (VQHS…QQEQ).

Homooligomer of variable subunit number; disulfide-linked. Interacts with CASQ1 in skeletal muscle. Interacts with CASQ2. Interacts with RYR1 in skeletal muscle. Post-translationally, phosphorylated by CaMK2. In terms of processing, N-glycosylated. As to expression, detected in skeletal muscle (at protein level). Detected in skeletal muscle.

The protein localises to the sarcoplasmic reticulum membrane. It is found in the microsome. The protein resides in the cell membrane. Its subcellular location is the sarcolemma. In terms of biological role, contributes to the regulation of lumenal Ca2+ release via the sarcoplasmic reticulum calcium release channels RYR1 and RYR2, a key step in triggering skeletal and heart muscle contraction. Required for normal organization of the triad junction, where T-tubules and the sarcoplasmic reticulum terminal cisternae are in close contact. Required for normal skeletal muscle strength. Plays a role in excitation-contraction coupling in the heart and in regulating the rate of heart beats. In Rattus norvegicus (Rat), this protein is Triadin.